Consider the following 397-residue polypeptide: Carbamoyl phosphate synthase small chain (397 aa).

A CPSase region spans residues 1 to 204 (MSPLLPSFPF…PAYRTLDTSK (204 aa)). The L-glutamine site is built by serine 53, glycine 256, and glycine 258. Positions 208 to 395 (KVVAYDFGVK…MELMNAAKKE (188 aa)) constitute a Glutamine amidotransferase type-1 domain. The active-site Nucleophile is the cysteine 284. Residues leucine 285, glutamine 288, asparagine 326, glycine 328, and phenylalanine 329 each coordinate L-glutamine. Active-site residues include histidine 368 and glutamate 370.

Belongs to the CarA family. In terms of assembly, composed of two chains; the small (or glutamine) chain promotes the hydrolysis of glutamine to ammonia, which is used by the large (or ammonia) chain to synthesize carbamoyl phosphate. Tetramer of heterodimers (alpha,beta)4.

The enzyme catalyses hydrogencarbonate + L-glutamine + 2 ATP + H2O = carbamoyl phosphate + L-glutamate + 2 ADP + phosphate + 2 H(+). It catalyses the reaction L-glutamine + H2O = L-glutamate + NH4(+). The protein operates within amino-acid biosynthesis; L-arginine biosynthesis; carbamoyl phosphate from bicarbonate: step 1/1. It functions in the pathway pyrimidine metabolism; UMP biosynthesis via de novo pathway; (S)-dihydroorotate from bicarbonate: step 1/3. Small subunit of the glutamine-dependent carbamoyl phosphate synthetase (CPSase). CPSase catalyzes the formation of carbamoyl phosphate from the ammonia moiety of glutamine, carbonate, and phosphate donated by ATP, constituting the first step of 2 biosynthetic pathways, one leading to arginine and/or urea and the other to pyrimidine nucleotides. The small subunit (glutamine amidotransferase) binds and cleaves glutamine to supply the large subunit with the substrate ammonia. The sequence is that of Carbamoyl phosphate synthase small chain from Polynucleobacter asymbioticus (strain DSM 18221 / CIP 109841 / QLW-P1DMWA-1) (Polynucleobacter necessarius subsp. asymbioticus).